The following is a 162-amino-acid chain: SsrA-binding protein (162 aa).

The segment covering 137 to 154 (HDKREDTKAREWDREKAR) has biased composition (basic and acidic residues). The disordered stretch occupies residues 137–162 (HDKREDTKAREWDREKARIMKNKHRG).

The protein belongs to the SmpB family.

It localises to the cytoplasm. Its function is as follows. Required for rescue of stalled ribosomes mediated by trans-translation. Binds to transfer-messenger RNA (tmRNA), required for stable association of tmRNA with ribosomes. tmRNA and SmpB together mimic tRNA shape, replacing the anticodon stem-loop with SmpB. tmRNA is encoded by the ssrA gene; the 2 termini fold to resemble tRNA(Ala) and it encodes a 'tag peptide', a short internal open reading frame. During trans-translation Ala-aminoacylated tmRNA acts like a tRNA, entering the A-site of stalled ribosomes, displacing the stalled mRNA. The ribosome then switches to translate the ORF on the tmRNA; the nascent peptide is terminated with the 'tag peptide' encoded by the tmRNA and targeted for degradation. The ribosome is freed to recommence translation, which seems to be the essential function of trans-translation. This is SsrA-binding protein from Aeromonas hydrophila subsp. hydrophila (strain ATCC 7966 / DSM 30187 / BCRC 13018 / CCUG 14551 / JCM 1027 / KCTC 2358 / NCIMB 9240 / NCTC 8049).